Here is a 286-residue protein sequence, read N- to C-terminus: Probable protein VP2 (286 aa).

Disordered regions lie at residues 67 to 108 (LPAA…GPED) and 184 to 286 (QAAR…GGGI). Positions 222 to 241 (GKTRSRRKAGRKAQRKRRRP) are enriched in basic residues. The segment covering 242 to 265 (SPSSSSSSCSNSESWESNSDSCST) has biased composition (low complexity).

Phosphorylated at C-terminal serines.

This is Probable protein VP2 from Homo sapiens (Human).